Here is a 105-residue protein sequence, read N- to C-terminus: Cell division protein FtsB (105 aa).

Residues 1-3 (MKP) are Cytoplasmic-facing. A helical membrane pass occupies residues 4 to 21 (FVLVLFALLALLQYRLWF). The Periplasmic portion of the chain corresponds to 22 to 105 (GENSLTEYFT…RSSEQSQDNQ (84 aa)). A coiled-coil region spans residues 38 to 75 (HQQSGNAELLERNEVLKEEIQDLKSGTEALEERARNEL).

This sequence belongs to the FtsB family. In terms of assembly, part of a complex composed of FtsB, FtsL and FtsQ.

Its subcellular location is the cell inner membrane. Its function is as follows. Essential cell division protein. May link together the upstream cell division proteins, which are predominantly cytoplasmic, with the downstream cell division proteins, which are predominantly periplasmic. This chain is Cell division protein FtsB, found in Shewanella amazonensis (strain ATCC BAA-1098 / SB2B).